The chain runs to 352 residues: Protein Wnt-3a (352 aa).

The signal sequence occupies residues 1–18; that stretch reads MGCFGYLLLIIGLHQVLA. 9 cysteine pairs are disulfide-bonded: Cys77–Cys88, Cys128–Cys136, Cys138–Cys155, Cys203–Cys217, Cys205–Cys212, Cys297–Cys312, Cys327–Cys342, Cys329–Cys339, and Cys334–Cys335. Asn87 is a glycosylation site (N-linked (GlcNAc...) asparagine). The O-palmitoleoyl serine moiety is linked to residue Ser209. Residue Asn298 is glycosylated (N-linked (GlcNAc...) asparagine).

The protein belongs to the Wnt family. In terms of processing, disulfide bonds have critical and distinct roles in secretion and activity. Loss of each conserved cysteine results in high molecular weight oxidized Wnt oligomers, which are formed through inter-Wnt disulfide bonding. Palmitoleoylation is required for efficient binding to frizzled receptors. Depalmitoleoylation leads to Wnt signaling pathway inhibition. As to expression, at neurula in anterior neural fold; at tailbud in dorsal midline of midbrain.

Its subcellular location is the secreted. It localises to the extracellular space. The protein localises to the extracellular matrix. Functionally, ligand for members of the frizzled family of seven transmembrane receptors. Functions in the canonical Wnt signaling pathway that results in activation of transcription factors of the TCF/LEF family. Required for normal embryonic mesoderm development and formation of caudal somites. Required for normal morphogenesis of the developing neural tube. This chain is Protein Wnt-3a (wnt3a), found in Xenopus laevis (African clawed frog).